A 201-amino-acid polypeptide reads, in one-letter code: Peptidyl-prolyl cis-trans isomerase CYP19-4 (201 aa).

The signal sequence occupies residues 1 to 23; it reads MAKASFILLGTLFLFGAIASIQA. The 164-residue stretch at 35–198 folds into the PPIase cyclophilin-type domain; it reads YFDVEIDGKS…SKVVIADSGE (164 aa).

Belongs to the cyclophilin-type PPIase family. In terms of assembly, interacts with EMB30/GNOM. In terms of tissue distribution, ubiquitous, mostly in aerial organs (at protein level).

Its subcellular location is the cytoplasm. It localises to the membrane. It is found in the endoplasmic reticulum. The protein resides in the secreted. The catalysed reaction is [protein]-peptidylproline (omega=180) = [protein]-peptidylproline (omega=0). With respect to regulation, binds cyclosporin A (CsA). CsA mediates some of its effects via an inhibitory action on PPIase. Its function is as follows. PPIases accelerate the folding of proteins. It catalyzes the cis-trans isomerization of proline imidic peptide bonds in oligopeptides. May be involved during embryogenesis and organ development by regulating the folding of EMB30/GNOM, and thus, by modulating its activity. The chain is Peptidyl-prolyl cis-trans isomerase CYP19-4 (CYP19-4) from Arabidopsis thaliana (Mouse-ear cress).